The primary structure comprises 177 residues: Large ribosomal subunit protein uL6 (177 aa).

The protein belongs to the universal ribosomal protein uL6 family. In terms of assembly, part of the 50S ribosomal subunit.

In terms of biological role, this protein binds to the 23S rRNA, and is important in its secondary structure. It is located near the subunit interface in the base of the L7/L12 stalk, and near the tRNA binding site of the peptidyltransferase center. The chain is Large ribosomal subunit protein uL6 from Methanocella arvoryzae (strain DSM 22066 / NBRC 105507 / MRE50).